Consider the following 385-residue polypeptide: S-adenosylmethionine synthase (385 aa).

ATP is bound at residue His16. Asp18 is a binding site for Mg(2+). Residue Glu44 participates in K(+) binding. L-methionine is bound by residues Glu57 and Gln100. The flexible loop stretch occupies residues 100 to 110; sequence QSPDINQGVDR. Residues 164 to 166, 230 to 231, Asp239, 245 to 246, Ala262, and Lys266 each bind ATP; these read DGK, KF, and RK. Residue Asp239 participates in L-methionine binding. Lys270 contacts L-methionine.

This sequence belongs to the AdoMet synthase family. In terms of assembly, homotetramer; dimer of dimers. It depends on Mg(2+) as a cofactor. K(+) serves as cofactor.

The protein localises to the cytoplasm. The enzyme catalyses L-methionine + ATP + H2O = S-adenosyl-L-methionine + phosphate + diphosphate. The protein operates within amino-acid biosynthesis; S-adenosyl-L-methionine biosynthesis; S-adenosyl-L-methionine from L-methionine: step 1/1. Catalyzes the formation of S-adenosylmethionine (AdoMet) from methionine and ATP. The overall synthetic reaction is composed of two sequential steps, AdoMet formation and the subsequent tripolyphosphate hydrolysis which occurs prior to release of AdoMet from the enzyme. The sequence is that of S-adenosylmethionine synthase from Helicobacter pylori (strain ATCC 700392 / 26695) (Campylobacter pylori).